A 332-amino-acid polypeptide reads, in one-letter code: Capsular polysaccharide phosphotransferase WcwK (332 aa).

Belongs to the stealth family.

This is Capsular polysaccharide phosphotransferase WcwK (wcwK) from Streptococcus pneumoniae.